We begin with the raw amino-acid sequence, 209 residues long: Ribosomal RNA small subunit methyltransferase G (209 aa).

S-adenosyl-L-methionine is bound by residues Gly-71, Phe-76, Ala-122 to Glu-123, and Arg-135.

It belongs to the methyltransferase superfamily. RNA methyltransferase RsmG family.

Its subcellular location is the cytoplasm. Its function is as follows. Specifically methylates the N7 position of a guanine in 16S rRNA. This is Ribosomal RNA small subunit methyltransferase G from Flavobacterium johnsoniae (strain ATCC 17061 / DSM 2064 / JCM 8514 / BCRC 14874 / CCUG 350202 / NBRC 14942 / NCIMB 11054 / UW101) (Cytophaga johnsonae).